The sequence spans 197 residues: uncharacterized protein (197 aa).

A disordered region spans residues 1-135; it reads MKTPWKFLAR…ERGKRANARV (135 aa). Over residues 14–32 the composition is skewed to polar residues; it reads RQPSGKTQESSAGNDTGSK. A compositionally biased stretch (basic and acidic residues) spans 83–96; the sequence is IHADEAQTTARDEA. Over residues 116 to 132 the composition is skewed to basic residues; it reads SQRKPRIKRRERGKRAN.

This sequence to Rhizobium NGR234A y4nF and y4aO.

This is an uncharacterized protein from Rhizobium meliloti (strain 1021) (Ensifer meliloti).